The primary structure comprises 381 residues: MIDTLRPVPFASEMAISKTVAWLNEQLELGNEQLLLMDCRPQELYESSHIESAINVAIPGIMLRRLQKGNLPVRALFTRCEDRDRFTRRCGTDTVVLYDENSSDWNENTGGESVLGLLLKKLKDEGCRAFYLEGGFSKFQAEFALHCETNLDGSCSSSSPPLPVLGLGGLRISSDSSSDIESDLDRDPNSATDSDGSPLSNSQPSFPVEILPFLYLGCAKDSTNLDVLEEFGIKYILNVTPNLPNLFENAGEFKYKQIPISDHWSQNLSQFFPEAISFIDEARGKNCGVLVHCLAGISRSVTVTVAYLMQKLNLSMNDAYDIVKMKKSNISPNFNFMGQLLDFERTLGLSSPCDNRVPAQQLYFTAPSNQNVYQVDSLQST.

The Rhodanese domain occupies 30–148 (GNEQLLLMDC…FQAEFALHCE (119 aa)). Residues 176 to 203 (SSSDIESDLDRDPNSATDSDGSPLSNSQ) form a disordered region. Residues 189-203 (NSATDSDGSPLSNSQ) are compositionally biased toward polar residues. In terms of domain architecture, Tyrosine-protein phosphatase spans 206–349 (FPVEILPFLY…LLDFERTLGL (144 aa)). The Phosphocysteine intermediate role is filled by cysteine 293.

It belongs to the protein-tyrosine phosphatase family. Non-receptor class dual specificity subfamily. Interacts with MAPK1/ERK2. In terms of processing, ubiquitinated by the SCF(FBXO31) complex, leading to its proteasomal degradation. As to expression, expressed in lung, heart, brain, and kidney, but not significantly in skeletal muscle or testis.

It is found in the cytoplasm. The enzyme catalyses O-phospho-L-tyrosyl-[protein] + H2O = L-tyrosyl-[protein] + phosphate. It catalyses the reaction O-phospho-L-seryl-[protein] + H2O = L-seryl-[protein] + phosphate. The catalysed reaction is O-phospho-L-threonyl-[protein] + H2O = L-threonyl-[protein] + phosphate. In terms of biological role, dual specificity protein phosphatase, which mediates dephosphorylation and inactivation of MAP kinases. Has a specificity for the ERK family. Implicated in muscle and neuronal differentiation. Plays an important role in alleviating chronic postoperative pain. Necessary for the normal dephosphorylation of the long-lasting phosphorylated forms of spinal MAPK1/3 and MAP kinase p38 induced by peripheral surgery, which drives the resolution of acute postoperative allodynia. Also important for dephosphorylation of MAPK1/3 in local wound tissue, which further contributes to resolution of acute pain. The polypeptide is Dual specificity protein phosphatase 6 (Dusp6) (Rattus norvegicus (Rat)).